The chain runs to 283 residues: tRNA (guanine-N(1)-)-methyltransferase (283 aa).

S-adenosyl-L-methionine-binding positions include glycine 113 and 133-138 (IGDYVL).

Belongs to the RNA methyltransferase TrmD family. Homodimer.

It is found in the cytoplasm. It carries out the reaction guanosine(37) in tRNA + S-adenosyl-L-methionine = N(1)-methylguanosine(37) in tRNA + S-adenosyl-L-homocysteine + H(+). In terms of biological role, specifically methylates guanosine-37 in various tRNAs. The protein is tRNA (guanine-N(1)-)-methyltransferase of Parafrankia sp. (strain EAN1pec).